Here is a 949-residue protein sequence, read N- to C-terminus: Glutamate receptor ionotropic, kainate 1 (949 aa).

An N-terminal signal peptide occupies residues 1–30; that stretch reads MERSTVLIQPGLWTRDTSWTLLYFLCYILP. Topologically, residues 31-576 are extracellular; the sequence is QTSPQVLRIG…VFSFLNPLSP (546 aa). Asn68, Asn74, Asn276, Asn379, Asn428, Asn439, and Asn446 each carry an N-linked (GlcNAc...) asparagine glycan. L-glutamate-binding residues include Pro531, Thr533, and Arg538. The N-linked (GlcNAc...) asparagine glycan is linked to Asn561. Residues 577–597 traverse the membrane as a helical segment; the sequence is DIWMYVLLACLGVSCVLFVIA. Residues 598-653 lie on the Cytoplasmic side of the membrane; sequence RFTPYEWYNPHPCNPDSDVVENNFTLLNSFWFGVGALMQQGSELMPKALSTRIVGG. The helical transmembrane segment at 654-674 threads the bilayer; the sequence is IWWFFTLIIISSYTANLAAFL. The Extracellular portion of the chain corresponds to 675–834; sequence TVERMESPID…KEASALGVEN (160 aa). 2 residues coordinate L-glutamate: Ser704 and Thr705. The residue at position 725 (Ser725) is a Phosphoserine; by PKC. Glu753 contributes to the L-glutamate binding site. Residue Thr761 is modified to Phosphothreonine; by PKC. The cysteines at positions 765 and 819 are disulfide-linked. Asn766 carries an N-linked (GlcNAc...) asparagine glycan. A helical transmembrane segment spans residues 835-855; that stretch reads IGGIFIVLAAGLVLSVFVAIG. Over 856 to 949 the chain is Cytoplasmic; the sequence is EFLYKSRKNN…RRTQRKETVA (94 aa).

Belongs to the glutamate-gated ion channel (TC 1.A.10.1) family. GRIK1 subfamily. As to quaternary structure, homotetramer or heterotetramer of pore-forming glutamate receptor subunits. Tetramers may be formed by the dimerization of dimers. Can form functional heteromeric receptors with GRIK4 and GRIK5. Interacts with KLHL17. Expressed in the olfactory bulb (at protein level). Expressed in subsets of neurons throughout the developing and adult central and peripheral nervous systems. In the CNS principally in the medial amygdaloid nuclei, medial habenulae, pyriform and cingulate cortices, and Purkinje cell layer. Also highly expressed in embryonic and adult dorsal root ganglia. Expressed at high levels in the trigeminal ganglion neurons.

The protein localises to the cell membrane. The protein resides in the postsynaptic cell membrane. The catalysed reaction is Ca(2+)(in) = Ca(2+)(out). In terms of biological role, ionotropic glutamate receptor that functions as a cation-permeable ligand-gated ion channel, gated by L-glutamate and the glutamatergic agonist kainic acid. L-glutamate acts as an excitatory neurotransmitter at many synapses in the central nervous system. Binding of the excitatory neurotransmitter L-glutamate induces a conformation change, leading to the opening of the cation channel, and thereby converts the chemical signal to an electrical impulse. The receptor then desensitizes rapidly and enters a transient inactive state, characterized by the presence of bound agonist. This Rattus norvegicus (Rat) protein is Glutamate receptor ionotropic, kainate 1 (Grik1).